The chain runs to 372 residues: tRNA pseudouridine synthase D (372 aa).

The active-site Nucleophile is the D85. Residues 160-330 form the TRUD domain; it reads GFANYFGYQR…MQGSRRFMWG (171 aa).

Belongs to the pseudouridine synthase TruD family.

The enzyme catalyses uridine(13) in tRNA = pseudouridine(13) in tRNA. In terms of biological role, responsible for synthesis of pseudouridine from uracil-13 in transfer RNAs. This Campylobacter jejuni subsp. jejuni serotype O:2 (strain ATCC 700819 / NCTC 11168) protein is tRNA pseudouridine synthase D.